The sequence spans 344 residues: Aspartate-semialdehyde dehydrogenase (344 aa).

Residues 10 to 13 (TGQV) and 38 to 39 (RS) contribute to the NADP(+) site. Arg-101 lines the phosphate pocket. Cys-131 serves as the catalytic Acyl-thioester intermediate. Gln-158 contributes to the substrate binding site. 161–162 (SG) is an NADP(+) binding site. Lys-228 lines the phosphate pocket. Residue Arg-250 coordinates substrate. His-257 acts as the Proton acceptor in catalysis. Asn-326 is an NADP(+) binding site.

The protein belongs to the aspartate-semialdehyde dehydrogenase family. In terms of assembly, homodimer.

It catalyses the reaction L-aspartate 4-semialdehyde + phosphate + NADP(+) = 4-phospho-L-aspartate + NADPH + H(+). Its pathway is amino-acid biosynthesis; L-lysine biosynthesis via DAP pathway; (S)-tetrahydrodipicolinate from L-aspartate: step 2/4. The protein operates within amino-acid biosynthesis; L-methionine biosynthesis via de novo pathway; L-homoserine from L-aspartate: step 2/3. It functions in the pathway amino-acid biosynthesis; L-threonine biosynthesis; L-threonine from L-aspartate: step 2/5. Its function is as follows. Catalyzes the NADPH-dependent formation of L-aspartate-semialdehyde (L-ASA) by the reductive dephosphorylation of L-aspartyl-4-phosphate. This Corynebacterium melassecola protein is Aspartate-semialdehyde dehydrogenase.